A 158-amino-acid chain; its full sequence is 2-C-methyl-D-erythritol 2,4-cyclodiphosphate synthase (158 aa).

A divalent metal cation is bound by residues aspartate 9 and histidine 11. 4-CDP-2-C-methyl-D-erythritol 2-phosphate-binding positions include aspartate 9 to histidine 11 and histidine 35 to serine 36. Histidine 43 contributes to the a divalent metal cation binding site. 4-CDP-2-C-methyl-D-erythritol 2-phosphate contacts are provided by residues aspartate 57–glycine 59, phenylalanine 62–aspartate 66, threonine 133–glutamate 136, phenylalanine 140, and arginine 143.

Belongs to the IspF family. As to quaternary structure, homotrimer. A divalent metal cation serves as cofactor.

The enzyme catalyses 4-CDP-2-C-methyl-D-erythritol 2-phosphate = 2-C-methyl-D-erythritol 2,4-cyclic diphosphate + CMP. Its pathway is isoprenoid biosynthesis; isopentenyl diphosphate biosynthesis via DXP pathway; isopentenyl diphosphate from 1-deoxy-D-xylulose 5-phosphate: step 4/6. In terms of biological role, involved in the biosynthesis of isopentenyl diphosphate (IPP) and dimethylallyl diphosphate (DMAPP), two major building blocks of isoprenoid compounds. Catalyzes the conversion of 4-diphosphocytidyl-2-C-methyl-D-erythritol 2-phosphate (CDP-ME2P) to 2-C-methyl-D-erythritol 2,4-cyclodiphosphate (ME-CPP) with a corresponding release of cytidine 5-monophosphate (CMP). This is 2-C-methyl-D-erythritol 2,4-cyclodiphosphate synthase from Methylococcus capsulatus (strain ATCC 33009 / NCIMB 11132 / Bath).